Consider the following 540-residue polypeptide: Glucose-6-phosphate isomerase (540 aa).

Glu-346 serves as the catalytic Proton donor. Active-site residues include His-377 and Lys-505.

This sequence belongs to the GPI family.

It is found in the cytoplasm. The catalysed reaction is alpha-D-glucose 6-phosphate = beta-D-fructose 6-phosphate. The protein operates within carbohydrate biosynthesis; gluconeogenesis. It participates in carbohydrate degradation; glycolysis; D-glyceraldehyde 3-phosphate and glycerone phosphate from D-glucose: step 2/4. Catalyzes the reversible isomerization of glucose-6-phosphate to fructose-6-phosphate. The sequence is that of Glucose-6-phosphate isomerase from Francisella tularensis subsp. mediasiatica (strain FSC147).